The following is a 475-amino-acid chain: L-ornithine N(5)-monooxygenase (475 aa).

FAD-binding positions include 65–73 (ERQPEFGWH) and Gln-84. Lys-89 contributes to the substrate binding site. Val-150 contributes to the FAD binding site. Position 238 to 241 (238 to 241 (GGQS)) interacts with NADP(+). Substrate-binding positions include 277–280 (NEIF) and Asn-307. 307–309 (NYG) is an NADP(+) binding site. FAD is bound at residue 446 to 448 (SLL). Position 449 (Ser-449) interacts with substrate.

It belongs to the lysine N(6)-hydroxylase/L-ornithine N(5)-oxygenase family. Homotetramer. Requires FAD as cofactor.

It catalyses the reaction L-ornithine + NADPH + O2 = N(5)-hydroxy-L-ornithine + NADP(+) + H2O. The catalysed reaction is L-ornithine + NADH + O2 = N(5)-hydroxy-L-ornithine + NAD(+) + H2O. The protein operates within siderophore biosynthesis. L-ornithine N(5)-monooxygenase; part of the gene cluster that mediates the biosynthesis of hydroxamate-containing siderophores that play a critical role in virulence via intracellular iron acquisition during macrophage infection. SID1 catalyzes the conversion of L-ornithine to N(5)-hydroxyornithine, the first step in the biosynthesis of all hydroxamate-containing siderophores. The protein is L-ornithine N(5)-monooxygenase of Ajellomyces capsulatus (Darling's disease fungus).